The following is a 152-amino-acid chain: Probable ribose-5-phosphate isomerase B (152 aa).

12–13 (DH) provides a ligand contact to D-ribulose 5-phosphate. Catalysis depends on Cys-70, which acts as the Proton acceptor. 71–75 (GTGVG) is a binding site for D-ribulose 5-phosphate. His-103 (proton donor) is an active-site residue. D-ribulose 5-phosphate is bound by residues Asp-104, Arg-114, Arg-137, and Arg-141.

Belongs to the LacAB/RpiB family. As to quaternary structure, homodimer.

It carries out the reaction aldehydo-D-ribose 5-phosphate = D-ribulose 5-phosphate. It functions in the pathway carbohydrate degradation; pentose phosphate pathway; D-ribose 5-phosphate from D-ribulose 5-phosphate (non-oxidative stage): step 1/1. Its function is as follows. Catalyzes the interconversion of ribulose-5-P and ribose-5-P. The protein is Probable ribose-5-phosphate isomerase B of Mycoplasma pneumoniae (strain ATCC 29342 / M129 / Subtype 1) (Mycoplasmoides pneumoniae).